A 174-amino-acid polypeptide reads, in one-letter code: Dual-action ribosomal maturation protein DarP (174 aa).

This sequence belongs to the DarP family.

Its subcellular location is the cytoplasm. Functionally, member of a network of 50S ribosomal subunit biogenesis factors which assembles along the 30S-50S interface, preventing incorrect 23S rRNA structures from forming. Promotes peptidyl transferase center (PTC) maturation. The chain is Dual-action ribosomal maturation protein DarP from Pseudomonas aeruginosa (strain LESB58).